The primary structure comprises 307 residues: MTESSPLAPSTAPATRKLWLAAIKPPMYTVAVVPITVGSAVAYGLTGQWHGDVFTIFLLSAIAIIAWINLSNDVFDSDTGIDVRKAHSVVNLTGNRNLVFLISNFFLLAGVLGLMSMSWRAQDWTVLELIGVAIFLGYTYQGPPFRLGYLGLGELICLITFGPLAIAAAYYSQSQSFSWNLLTPSVFVGISTAIILFCSHFHQVEDDLAAGKKSPIVRLGTKLGSQVLTLSVVSLYLITAIGVLCHQAPWQTLLIIASLPWAVQLIRHVGQYHDQPEQVSNCKFIAVNLHFFSGMLMAAGYGWAGLG.

8 consecutive transmembrane segments (helical) span residues 27–47, 51–71, 98–118, 125–145, 147–167, 177–197, 223–243, and 284–304; these read MYTVAVVPITVGSAVAYGLTG, GDVFTIFLLSAIAIIAWINLS, LVFLISNFFLLAGVLGLMSMS, TVLELIGVAIFLGYTYQGPPF, LGYLGLGELICLITFGPLAIA, FSWNLLTPSVFVGISTAIILF, LGSQVLTLSVVSLYLITAIGV, and FIAVNLHFFSGMLMAAGYGWA.

This sequence belongs to the MenA family. Type 2 subfamily.

The protein resides in the cell inner membrane. It carries out the reaction 2-carboxy-1,4-naphthoquinone + phytyl diphosphate + H(+) = demethylphylloquinone + CO2 + diphosphate. Its pathway is cofactor biosynthesis; phylloquinone biosynthesis. Functionally, involved in the synthesis of phylloquinone (vitamin K1). Catalyzes the transfer of a prenyl chain to 2-carboxy-1,4-naphthoquinone. This is 2-carboxy-1,4-naphthoquinone phytyltransferase from Synechocystis sp. (strain ATCC 27184 / PCC 6803 / Kazusa).